Reading from the N-terminus, the 486-residue chain is UDP-N-acetylmuramoyl-L-alanyl-D-glutamate--2,6-diaminopimelate ligase (486 aa).

A UDP-N-acetyl-alpha-D-muramoyl-L-alanyl-D-glutamate-binding site is contributed by serine 30. 111–117 (GTNGKTT) lines the ATP pocket. Residues 153 to 154 (TT), serine 180, glutamine 186, and arginine 188 contribute to the UDP-N-acetyl-alpha-D-muramoyl-L-alanyl-D-glutamate site. Lysine 220 carries the post-translational modification N6-carboxylysine. Meso-2,6-diaminopimelate-binding positions include arginine 378, 402-405 (DNPR), glycine 455, and glutamate 459. Positions 402–405 (DNPR) match the Meso-diaminopimelate recognition motif motif.

Belongs to the MurCDEF family. MurE subfamily. It depends on Mg(2+) as a cofactor. Carboxylation is probably crucial for Mg(2+) binding and, consequently, for the gamma-phosphate positioning of ATP.

It is found in the cytoplasm. The catalysed reaction is UDP-N-acetyl-alpha-D-muramoyl-L-alanyl-D-glutamate + meso-2,6-diaminopimelate + ATP = UDP-N-acetyl-alpha-D-muramoyl-L-alanyl-gamma-D-glutamyl-meso-2,6-diaminopimelate + ADP + phosphate + H(+). Its pathway is cell wall biogenesis; peptidoglycan biosynthesis. Its function is as follows. Catalyzes the addition of meso-diaminopimelic acid to the nucleotide precursor UDP-N-acetylmuramoyl-L-alanyl-D-glutamate (UMAG) in the biosynthesis of bacterial cell-wall peptidoglycan. The polypeptide is UDP-N-acetylmuramoyl-L-alanyl-D-glutamate--2,6-diaminopimelate ligase (Parabacteroides distasonis (strain ATCC 8503 / DSM 20701 / CIP 104284 / JCM 5825 / NCTC 11152)).